Reading from the N-terminus, the 141-residue chain is NADH dehydrogenase [ubiquinone] 1 alpha subcomplex subunit 11 (141 aa).

Ala-2 bears the N-acetylalanine mark. The next 2 membrane-spanning stretches (helical) occupy residues 21–43 (KAYS…RVTL) and 58–80 (QYTF…SAHV).

This sequence belongs to the complex I NDUFA11 subunit family. As to quaternary structure, complex I is composed of 45 different subunits.

Its subcellular location is the mitochondrion inner membrane. Its function is as follows. Accessory subunit of the mitochondrial membrane respiratory chain NADH dehydrogenase (Complex I), that is believed not to be involved in catalysis. Complex I functions in the transfer of electrons from NADH to the respiratory chain. The immediate electron acceptor for the enzyme is believed to be ubiquinone. This Homo sapiens (Human) protein is NADH dehydrogenase [ubiquinone] 1 alpha subcomplex subunit 11 (NDUFA11).